We begin with the raw amino-acid sequence, 99 residues long: Large ribosomal subunit protein uL23 (99 aa).

The protein belongs to the universal ribosomal protein uL23 family. In terms of assembly, part of the 50S ribosomal subunit. Contacts protein L29, and trigger factor when it is bound to the ribosome.

In terms of biological role, one of the early assembly proteins it binds 23S rRNA. One of the proteins that surrounds the polypeptide exit tunnel on the outside of the ribosome. Forms the main docking site for trigger factor binding to the ribosome. The sequence is that of Large ribosomal subunit protein uL23 from Shewanella woodyi (strain ATCC 51908 / MS32).